We begin with the raw amino-acid sequence, 266 residues long: Thymidylate synthase (266 aa).

R24 contributes to the dUMP binding site. H54 is a (6R)-5,10-methylene-5,6,7,8-tetrahydrofolate binding site. 129–130 (RR) is a binding site for dUMP. Residue C149 is the Nucleophile of the active site. DUMP-binding positions include 169–172 (RSAD), N180, and 210–212 (HIY). D172 serves as a coordination point for (6R)-5,10-methylene-5,6,7,8-tetrahydrofolate. A (6R)-5,10-methylene-5,6,7,8-tetrahydrofolate-binding site is contributed by A265.

The protein belongs to the thymidylate synthase family. Bacterial-type ThyA subfamily. In terms of assembly, homodimer.

Its subcellular location is the cytoplasm. It carries out the reaction dUMP + (6R)-5,10-methylene-5,6,7,8-tetrahydrofolate = 7,8-dihydrofolate + dTMP. It participates in pyrimidine metabolism; dTTP biosynthesis. Its function is as follows. Catalyzes the reductive methylation of 2'-deoxyuridine-5'-monophosphate (dUMP) to 2'-deoxythymidine-5'-monophosphate (dTMP) while utilizing 5,10-methylenetetrahydrofolate (mTHF) as the methyl donor and reductant in the reaction, yielding dihydrofolate (DHF) as a by-product. This enzymatic reaction provides an intracellular de novo source of dTMP, an essential precursor for DNA biosynthesis. The polypeptide is Thymidylate synthase (Mycobacterium bovis (strain ATCC BAA-935 / AF2122/97)).